Reading from the N-terminus, the 98-residue chain is MYSSIMSLVFLLPIVAVVNLISNQSHFLMTLLSLEGITLSLVLFVPISLSIMSASNVSISVILLTFGACEASLGLSLMVLMSRSYGTDMLNSLTANKC.

Helical transmembrane passes span methionine 1–isoleucine 21, phenylalanine 27–isoleucine 47, and valine 61–methionine 81.

The protein belongs to the complex I subunit 4L family.

The protein localises to the mitochondrion membrane. It catalyses the reaction a ubiquinone + NADH + 5 H(+)(in) = a ubiquinol + NAD(+) + 4 H(+)(out). In terms of biological role, core subunit of the mitochondrial membrane respiratory chain NADH dehydrogenase (Complex I) that is believed to belong to the minimal assembly required for catalysis. Complex I functions in the transfer of electrons from NADH to the respiratory chain. The immediate electron acceptor for the enzyme is believed to be ubiquinone. In Lumbricus terrestris (Common earthworm), this protein is NADH-ubiquinone oxidoreductase chain 4L (ND4L).